Consider the following 328-residue polypeptide: Cytochrome c biogenesis protein CcsA (328 aa).

8 helical membrane passes run 13 to 33, 46 to 66, 73 to 93, 101 to 121, 146 to 166, 234 to 254, 263 to 283, and 295 to 315; these read ISFS…LVNL, GIVI…IYSG, LYES…VSYF, LNAI…SGLL, MILG…LLVI, IISL…VWAN, WDPK…YLHI, and AIVA…VNLL.

The protein belongs to the CcmF/CycK/Ccl1/NrfE/CcsA family. May interact with Ccs1.

The protein resides in the plastid. The protein localises to the chloroplast thylakoid membrane. In terms of biological role, required during biogenesis of c-type cytochromes (cytochrome c6 and cytochrome f) at the step of heme attachment. In Nasturtium officinale (Watercress), this protein is Cytochrome c biogenesis protein CcsA.